Reading from the N-terminus, the 113-residue chain is Guanylate cyclase activator 2B (113 aa).

A signal peptide spans 1–27 (MASRAAAGLLLCGVALVFLVLLQGTQS). A propeptide spanning residues 28 to 97 (VYIQYQGFRV…SIFQALRTIA (70 aa)) is cleaved from the precursor. 3 disulfides stabilise this stretch: cysteine 68/cysteine 81, cysteine 101/cysteine 109, and cysteine 104/cysteine 112.

Belongs to the guanylin family.

Its subcellular location is the secreted. Functionally, endogenous activator of intestinal guanylate cyclase. It stimulates this enzyme through the same receptor binding region as the heat-stable enterotoxins. May be a potent physiological regulator of intestinal fluid and electrolyte transport. May be an autocrine/paracrine regulator of intestinal salt and water transport. The protein is Guanylate cyclase activator 2B (GUCA2B) of Sus scrofa (Pig).